A 270-amino-acid chain; its full sequence is Flavin-dependent thymidylate synthase (270 aa).

The 206-residue stretch at 13-218 (GFVRLVDQMG…PLAWAAFEEH (206 aa)) folds into the ThyX domain. Residues serine 59, 82-84 (RHR), and glutamate 90 contribute to the FAD site. DUMP-binding positions include 79 to 82 (QWFR), 90 to 94 (EISGR), and arginine 157. The ThyX motif signature appears at 82–92 (RHRTASVNEIS). FAD contacts are provided by residues 173–175 (DLH) and histidine 179. Residue arginine 184 participates in dUMP binding. The active-site Involved in ionization of N3 of dUMP, leading to its activation is the arginine 184.

Belongs to the thymidylate synthase ThyX family. In terms of assembly, homotetramer. The cofactor is FAD.

It catalyses the reaction dUMP + (6R)-5,10-methylene-5,6,7,8-tetrahydrofolate + NADPH + H(+) = dTMP + (6S)-5,6,7,8-tetrahydrofolate + NADP(+). It functions in the pathway pyrimidine metabolism; dTTP biosynthesis. Catalyzes the reductive methylation of 2'-deoxyuridine-5'-monophosphate (dUMP) to 2'-deoxythymidine-5'-monophosphate (dTMP) while utilizing 5,10-methylenetetrahydrofolate (mTHF) as the methyl donor, and NADPH and FADH(2) as the reductant. The polypeptide is Flavin-dependent thymidylate synthase (Thermus thermophilus (strain ATCC BAA-163 / DSM 7039 / HB27)).